Here is a 443-residue protein sequence, read N- to C-terminus: Differentially expressed in FDCP 8 homolog B (443 aa).

A disordered region spans residues 14–49 (HLNPFDKKGGAERHPADSETQPCKDSSTSSPLSVPE). Over residues 17–30 (PFDKKGGAERHPAD) the composition is skewed to basic and acidic residues. Residues 31–45 (SETQPCKDSSTSSPL) show a composition bias toward polar residues. 2 Phorbol-ester/DAG-type zinc fingers span residues 134–185 (EHRF…TKPC) and 364–424 (IHTT…STSC).

Belongs to the DEF8 family.

Functionally, positively regulates lysosome peripheral distribution and ruffled border formation in osteoclasts. Involved in bone resorption. This is Differentially expressed in FDCP 8 homolog B (def8-b) from Xenopus laevis (African clawed frog).